The primary structure comprises 442 residues: MEQAPVSTIHEIGKHDGQSVTIKGWLYNLRESGKLLFPIFRDGTGLLQGVLFKKNVSPELFDLVKNLTQESSVIVTGNVRAEQRAPGGYEMDVTALEVVQRVPENEPYPITPKEHGIEFLMEHRHLWVRSQRQAAILRIRGEIVRSAHEFFDKQGFTLTEPPILTPAACEGTSTLFPVDYFGDPAFLTQSGQLYIEATAMALGKVYSFGPTFRAEKSKTRRHLTEFWMVEPEVAFAELDDIMKLAEDFITHIVKSVLERRRDDLKTIERDLSKLENIDTPFPRISYDEAVQMLQEGHAKGELESRFEWGGDLGSPDETYISSKFDRPVMIHRYPVEVKAFYMEPDPNNSKVALCVDVLAPEGYGEVIGGSQRMGSYEKLLARIHEHQLPEESFKWYLDLRKFGGVPHSGFGMGIERAVAWICGLDHVRETIPFARTLHRIYP.

The protein belongs to the class-II aminoacyl-tRNA synthetase family. In terms of assembly, homodimer.

The protein localises to the cytoplasm. It carries out the reaction tRNA(Asn) + L-asparagine + ATP = L-asparaginyl-tRNA(Asn) + AMP + diphosphate + H(+). This chain is Asparagine--tRNA ligase, found in Koribacter versatilis (strain Ellin345).